The following is a 543-amino-acid chain: Rop guanine nucleotide exchange factor 11 (543 aa).

Positions 61–89 (QPGKCGSVDRPSLPIGGVTPNRNDKLPRV) are disordered. Residues 95 to 456 (MEALIILQAA…QLTQEPTNNA (362 aa)) form the PRONE domain.

In terms of assembly, interacts with ARAC4/ROP2, ARAC3/ROP, ARAC9/ROP8, PHYA and PHYB. Highly expressed in elongating regions of roots and pollen grains. Expressed in flowers, and at lower levels in leaves and stems.

It is found in the cytoplasm. Its function is as follows. Guanine-nucleotide exchange factor (GEF) that acts as an activator of Rop (Rho of plants) GTPases by promoting the exchange of GDP for GTP. Functions as a light-signaling switch that functions in root growth and development through the activation of Rop in a phytochrome-dependent manner. May act as a negative regulator of phytochrome-mediated primary root development. The polypeptide is Rop guanine nucleotide exchange factor 11 (ROPGEF11) (Arabidopsis thaliana (Mouse-ear cress)).